The chain runs to 257 residues: 5'-nucleotidase SurE (257 aa).

Residues Asp-8, Asp-9, Ser-40, and Asn-95 each contribute to the a divalent metal cation site.

Belongs to the SurE nucleotidase family. It depends on a divalent metal cation as a cofactor.

The protein resides in the cytoplasm. The catalysed reaction is a ribonucleoside 5'-phosphate + H2O = a ribonucleoside + phosphate. Functionally, nucleotidase that shows phosphatase activity on nucleoside 5'-monophosphates. This is 5'-nucleotidase SurE from Desulfovibrio desulfuricans (strain ATCC 27774 / DSM 6949 / MB).